The chain runs to 927 residues: Bifunctional glutamine synthetase adenylyltransferase/adenylyl-removing enzyme (927 aa).

The adenylyl removase stretch occupies residues 1 to 428 (MTMTDASDLL…AQFDQVFADK (428 aa)). The tract at residues 438–927 (DQAAGCIWSG…AALWARVFGA (490 aa)) is adenylyl transferase.

This sequence belongs to the GlnE family. It depends on Mg(2+) as a cofactor.

The enzyme catalyses [glutamine synthetase]-O(4)-(5'-adenylyl)-L-tyrosine + phosphate = [glutamine synthetase]-L-tyrosine + ADP. The catalysed reaction is [glutamine synthetase]-L-tyrosine + ATP = [glutamine synthetase]-O(4)-(5'-adenylyl)-L-tyrosine + diphosphate. Functionally, involved in the regulation of glutamine synthetase GlnA, a key enzyme in the process to assimilate ammonia. When cellular nitrogen levels are high, the C-terminal adenylyl transferase (AT) inactivates GlnA by covalent transfer of an adenylyl group from ATP to specific tyrosine residue of GlnA, thus reducing its activity. Conversely, when nitrogen levels are low, the N-terminal adenylyl removase (AR) activates GlnA by removing the adenylyl group by phosphorolysis, increasing its activity. The regulatory region of GlnE binds the signal transduction protein PII (GlnB) which indicates the nitrogen status of the cell. This is Bifunctional glutamine synthetase adenylyltransferase/adenylyl-removing enzyme from Burkholderia pseudomallei (strain K96243).